The sequence spans 352 residues: DNA polymerase IV (352 aa).

Residues 6 to 187 (IIHIDCDCFY…LPVSKLHGVG (182 aa)) form the UmuC domain. Mg(2+)-binding residues include Asp10 and Asp105. The active site involves Glu106.

This sequence belongs to the DNA polymerase type-Y family. Monomer. Requires Mg(2+) as cofactor.

It is found in the cytoplasm. It catalyses the reaction DNA(n) + a 2'-deoxyribonucleoside 5'-triphosphate = DNA(n+1) + diphosphate. In terms of biological role, poorly processive, error-prone DNA polymerase involved in untargeted mutagenesis. Copies undamaged DNA at stalled replication forks, which arise in vivo from mismatched or misaligned primer ends. These misaligned primers can be extended by PolIV. Exhibits no 3'-5' exonuclease (proofreading) activity. May be involved in translesional synthesis, in conjunction with the beta clamp from PolIII. This Ectopseudomonas mendocina (strain ymp) (Pseudomonas mendocina) protein is DNA polymerase IV.